The primary structure comprises 321 residues: Probable arabinan endo-1,5-alpha-L-arabinosidase C (321 aa).

Positions 1-18 are cleaved as a signal peptide; it reads MYLYTLILLFLASANVNA. Catalysis depends on Asp-33, which acts as the Proton acceptor. Asn-192 carries N-linked (GlcNAc...) asparagine glycosylation. Glu-200 serves as the catalytic Proton donor. An N-linked (GlcNAc...) asparagine glycan is attached at Asn-224.

This sequence belongs to the glycosyl hydrolase 43 family.

It localises to the secreted. The catalysed reaction is Endohydrolysis of (1-&gt;5)-alpha-arabinofuranosidic linkages in (1-&gt;5)-arabinans.. Its pathway is glycan metabolism; L-arabinan degradation. Endo-1,5-alpha-L-arabinanase involved in degradation of pectin. Its preferred substrate is linear 1,5-alpha-L-arabinan. The protein is Probable arabinan endo-1,5-alpha-L-arabinosidase C (abnC) of Aspergillus fumigatus (strain CBS 144.89 / FGSC A1163 / CEA10) (Neosartorya fumigata).